We begin with the raw amino-acid sequence, 260 residues long: Glucosamine-6-phosphate deaminase (260 aa).

The active-site Proton acceptor; for enolization step is the Asp67. The active-site For ring-opening step is the Asp136. Catalysis depends on His138, which acts as the Proton acceptor; for ring-opening step. Glu143 acts as the For ring-opening step in catalysis.

This sequence belongs to the glucosamine/galactosamine-6-phosphate isomerase family. NagB subfamily.

It carries out the reaction alpha-D-glucosamine 6-phosphate + H2O = beta-D-fructose 6-phosphate + NH4(+). It functions in the pathway amino-sugar metabolism; N-acetylneuraminate degradation; D-fructose 6-phosphate from N-acetylneuraminate: step 5/5. In terms of biological role, catalyzes the reversible isomerization-deamination of glucosamine 6-phosphate (GlcN6P) to form fructose 6-phosphate (Fru6P) and ammonium ion. The chain is Glucosamine-6-phosphate deaminase from Arthrobacter sp. (strain FB24).